A 311-amino-acid chain; its full sequence is Protoheme IX farnesyltransferase (311 aa).

A run of 8 helical transmembrane segments spans residues 30–50, 55–75, 108–128, 129–149, 153–173, 182–202, 233–253, and 287–307; these read VVQLIVFCAAIGMLLAVPGWP, WGVALAASIGIWLVASAAAAF, FAVLLCAAGMAVLWVWVNALT, MWLTFATFVGYAVIYTVLLKP, QNIVIGGASGAMPPVLGWAAM, WILCLIIFLWTPPHFWALALY, FVLFAATLLPFVYGMSGWFYL, and IWHLSLLFAALLLDHYLGPLL.

The protein belongs to the UbiA prenyltransferase family. Protoheme IX farnesyltransferase subfamily.

The protein localises to the cell inner membrane. It carries out the reaction heme b + (2E,6E)-farnesyl diphosphate + H2O = Fe(II)-heme o + diphosphate. Its pathway is porphyrin-containing compound metabolism; heme O biosynthesis; heme O from protoheme: step 1/1. Its function is as follows. Converts heme B (protoheme IX) to heme O by substitution of the vinyl group on carbon 2 of heme B porphyrin ring with a hydroxyethyl farnesyl side group. The chain is Protoheme IX farnesyltransferase from Methylibium petroleiphilum (strain ATCC BAA-1232 / LMG 22953 / PM1).